Reading from the N-terminus, the 513-residue chain is Exoglucanase 1 (513 aa).

A signal peptide spans 1–17; it reads MYRKLAVISAFLATARA. A Pyrrolidone carboxylic acid modification is found at Gln-18. The interval 18 to 453 is catalytic; that stretch reads QSACTLQSET…GSTGNPSGGN (436 aa). 10 disulfides stabilise this stretch: Cys-21–Cys-89, Cys-36–Cys-42, Cys-67–Cys-88, Cys-78–Cys-84, Cys-155–Cys-414, Cys-189–Cys-227, Cys-193–Cys-226, Cys-247–Cys-273, Cys-255–Cys-260, and Cys-278–Cys-348. An N-linked (GlcNAc) asparagine glycan is attached at Asn-62. Residue Glu-229 is the Nucleophile of the active site. The active-site Proton donor/acceptor is the Glu-234. N-linked (GlcNAc) asparagine glycans are attached at residues Asn-287 and Asn-401. Over residues 401-437 the composition is skewed to polar residues; sequence NETSSTPGAVRGSCSTSSGVPAQVESQSPNAKVTFSN. The interval 401–480 is disordered; it reads NETSSTPGAV…TGSSPGPTQS (80 aa). Residues 449–459 are compositionally biased toward gly residues; sequence PSGGNPPGGNR. Positions 454–477 are linker; sequence PPGGNRGTTTTRRPATTTGSSPGP. The segment covering 460–478 has biased composition (low complexity); the sequence is GTTTTRRPATTTGSSPGPT. An O-linked (Man) threonine glycan is attached at Thr-461. Residues Thr-462, Thr-463, and Thr-464 are each glycosylated (O-linked (Man...) threonine). Thr-469 carries O-linked (Man) threonine glycosylation. O-linked (Man...) threonine glycans are attached at residues Thr-470 and Thr-471. O-linked (Man) serine glycosylation is found at Ser-473 and Ser-474. Positions 477-513 constitute a CBM1 domain; sequence PTQSHYGQCGGIGYSGPTVCASGTTCQVLNPYYSQCL. O-linked (Man) threonine glycosylation is present at Thr-478. O-linked (Man) serine glycosylation is found at Ser-480 and Ser-491. 2 disulfide bridges follow: Cys-485/Cys-502 and Cys-496/Cys-512.

This sequence belongs to the glycosyl hydrolase 7 (cellulase C) family. N-glycosylated. The catalytic core domain comprises three N-linked glycans which each consist of a single N-acetylglucosamine residue. In terms of processing, O-glycosylated. Within the linker domain, all 8 threonines are variably glycosylated with between at least one, and up to three, mannose residues per site. All serines in this domain are at least partially glycosylated with a single mannose residue. O-glycosylation of the cellulase linker provides protection from proteolysis. Linker glycans also contribute to binding affinity of cellobiohydrolases to cellulose.

The protein localises to the secreted. The catalysed reaction is Hydrolysis of (1-&gt;4)-beta-D-glucosidic linkages in cellulose and cellotetraose, releasing cellobiose from the non-reducing ends of the chains.. Exocellobiohydrolases (CBH) that catalyzes the hydrolysis of 1,4-beta-D-glucosidic bonds in cellulose to release the disaccharide cellobiose. The degradation of cellulose involves an interplay between different cellulolytic enzymes. Hydrolysis starts with endoglucanases (EGs), which cut internal beta-1,4-glucosidic bonds in cellulose to reduce the polymerization degree of the substrate and create new chain ends for exocellobiohydrolases (CBHs). The CBHs release the disaccharide cellobiose from the non-reducing end of the cellulose polymer chain. Finally, beta-1,4-glucosidases hydrolyze the cellobiose and other short cello-oligosaccharides into glucose units. This is Exoglucanase 1 (cbh1) from Hypocrea jecorina (Trichoderma reesei).